A 153-amino-acid chain; its full sequence is D-aminoacyl-tRNA deacylase (153 aa).

The Gly-cisPro motif, important for rejection of L-amino acids signature appears at 137-138; that stretch reads GP.

Belongs to the DTD family. Homodimer.

It localises to the cytoplasm. The catalysed reaction is glycyl-tRNA(Ala) + H2O = tRNA(Ala) + glycine + H(+). It catalyses the reaction a D-aminoacyl-tRNA + H2O = a tRNA + a D-alpha-amino acid + H(+). An aminoacyl-tRNA editing enzyme that deacylates mischarged D-aminoacyl-tRNAs. Also deacylates mischarged glycyl-tRNA(Ala), protecting cells against glycine mischarging by AlaRS. Acts via tRNA-based rather than protein-based catalysis; rejects L-amino acids rather than detecting D-amino acids in the active site. By recycling D-aminoacyl-tRNA to D-amino acids and free tRNA molecules, this enzyme counteracts the toxicity associated with the formation of D-aminoacyl-tRNA entities in vivo and helps enforce protein L-homochirality. The sequence is that of D-aminoacyl-tRNA deacylase from Myxococcus xanthus (strain DK1622).